Consider the following 126-residue polypeptide: Small ribosomal subunit protein eS6 (126 aa).

The protein belongs to the eukaryotic ribosomal protein eS6 family.

The sequence is that of Small ribosomal subunit protein eS6 from Thermococcus sibiricus (strain DSM 12597 / MM 739).